A 221-amino-acid polypeptide reads, in one-letter code: Phosphoribosylformylglycinamidine synthase subunit PurQ (221 aa).

The region spanning 8–221 is the Glutamine amidotransferase type-1 domain; the sequence is NVGIIRFPGT…GLKFFKSFLD (214 aa). Cysteine 91 serves as the catalytic Nucleophile. Residues histidine 198 and glutamate 200 contribute to the active site.

Part of the FGAM synthase complex composed of 1 PurL, 1 PurQ and 2 PurS subunits.

It localises to the cytoplasm. It carries out the reaction N(2)-formyl-N(1)-(5-phospho-beta-D-ribosyl)glycinamide + L-glutamine + ATP + H2O = 2-formamido-N(1)-(5-O-phospho-beta-D-ribosyl)acetamidine + L-glutamate + ADP + phosphate + H(+). It catalyses the reaction L-glutamine + H2O = L-glutamate + NH4(+). Its pathway is purine metabolism; IMP biosynthesis via de novo pathway; 5-amino-1-(5-phospho-D-ribosyl)imidazole from N(2)-formyl-N(1)-(5-phospho-D-ribosyl)glycinamide: step 1/2. Part of the phosphoribosylformylglycinamidine synthase complex involved in the purines biosynthetic pathway. Catalyzes the ATP-dependent conversion of formylglycinamide ribonucleotide (FGAR) and glutamine to yield formylglycinamidine ribonucleotide (FGAM) and glutamate. The FGAM synthase complex is composed of three subunits. PurQ produces an ammonia molecule by converting glutamine to glutamate. PurL transfers the ammonia molecule to FGAR to form FGAM in an ATP-dependent manner. PurS interacts with PurQ and PurL and is thought to assist in the transfer of the ammonia molecule from PurQ to PurL. The chain is Phosphoribosylformylglycinamidine synthase subunit PurQ from Methanosphaera stadtmanae (strain ATCC 43021 / DSM 3091 / JCM 11832 / MCB-3).